A 403-amino-acid polypeptide reads, in one-letter code: MTKYVLVLNSGSSSIKFQVLDPEANATADPFVSGIVEKIGEKKGHIQIQTETSKMEDNRPILSHSVGLERAFGMMTLLGVGPQDLDLVAAGHRVVHGGATFTEPVLIDDEVIEQLKELIPLAPLHNPANIDGIENARALLEHVPHVAVFDTAFFSTLPEHAANYAIKKDIADEYNIRRYGFHGTSHEYVSSKVPDLLGKPAEEVNQITLHLGNGASAAAIRGGEAVDTTMGLTPLAGLVMGTRSGDIDPGIIFHLARSGGMTVDQADKLLNRESGLKGMAGVNDFRELKTLIEDGDENAQLAYDVYIHALRRFIGSYMLILGGVDAIVFTAGVGENAVQVRRDAMADLQNFGIEIDDARNENSEGIVGAREISTDDSTVKVFVVPTNEELAIARQATELAEQQ.

Asn-9 serves as a coordination point for Mg(2+). ATP is bound at residue Lys-16. Arg-93 serves as a coordination point for substrate. The active-site Proton donor/acceptor is the Asp-150. ATP is bound by residues 210–214 (HLGNG), 284–286 (DFR), and 332–336 (GVGEN). Glu-388 lines the Mg(2+) pocket.

Belongs to the acetokinase family. Homodimer. Mg(2+) serves as cofactor. The cofactor is Mn(2+).

The protein resides in the cytoplasm. It carries out the reaction acetate + ATP = acetyl phosphate + ADP. It participates in metabolic intermediate biosynthesis; acetyl-CoA biosynthesis; acetyl-CoA from acetate: step 1/2. Its function is as follows. Catalyzes the formation of acetyl phosphate from acetate and ATP. Can also catalyze the reverse reaction. The sequence is that of Acetate kinase from Corynebacterium jeikeium (strain K411).